The following is a 124-amino-acid chain: Small ribosomal subunit protein uS13 (124 aa).

The segment at 95-124 (GLPVNGQRTRTNARSSKGPRRTVAGKKKAR) is disordered. Positions 100-109 (GQRTRTNARS) are enriched in polar residues. Positions 111–124 (KGPRRTVAGKKKAR) are enriched in basic residues.

It belongs to the universal ribosomal protein uS13 family. As to quaternary structure, part of the 30S ribosomal subunit. Forms a loose heterodimer with protein S19. Forms two bridges to the 50S subunit in the 70S ribosome.

In terms of biological role, located at the top of the head of the 30S subunit, it contacts several helices of the 16S rRNA. In the 70S ribosome it contacts the 23S rRNA (bridge B1a) and protein L5 of the 50S subunit (bridge B1b), connecting the 2 subunits; these bridges are implicated in subunit movement. Contacts the tRNAs in the A and P-sites. The polypeptide is Small ribosomal subunit protein uS13 (Tropheryma whipplei (strain TW08/27) (Whipple's bacillus)).